Reading from the N-terminus, the 140-residue chain is Nucleoside diphosphate kinase (140 aa).

ATP is bound by residues Lys-11, Phe-59, Arg-87, Thr-93, Arg-104, and Asn-114. His-117 functions as the Pros-phosphohistidine intermediate in the catalytic mechanism.

It belongs to the NDK family. As to quaternary structure, homotetramer. Requires Mg(2+) as cofactor.

Its subcellular location is the cytoplasm. It catalyses the reaction a 2'-deoxyribonucleoside 5'-diphosphate + ATP = a 2'-deoxyribonucleoside 5'-triphosphate + ADP. It carries out the reaction a ribonucleoside 5'-diphosphate + ATP = a ribonucleoside 5'-triphosphate + ADP. Major role in the synthesis of nucleoside triphosphates other than ATP. The ATP gamma phosphate is transferred to the NDP beta phosphate via a ping-pong mechanism, using a phosphorylated active-site intermediate. This is Nucleoside diphosphate kinase from Rhizorhabdus wittichii (strain DSM 6014 / CCUG 31198 / JCM 15750 / NBRC 105917 / EY 4224 / RW1) (Sphingomonas wittichii).